We begin with the raw amino-acid sequence, 114 residues long: Iron-sulfur cluster insertion protein ErpA (114 aa).

Residues C42, C106, and C108 each coordinate iron-sulfur cluster.

Belongs to the HesB/IscA family. As to quaternary structure, homodimer. The cofactor is iron-sulfur cluster.

Required for insertion of 4Fe-4S clusters for at least IspG. The chain is Iron-sulfur cluster insertion protein ErpA from Citrobacter koseri (strain ATCC BAA-895 / CDC 4225-83 / SGSC4696).